Here is a 194-residue protein sequence, read N- to C-terminus: UPF0301 protein FTA_1286 (194 aa).

Belongs to the UPF0301 (AlgH) family.

In Francisella tularensis subsp. holarctica (strain FTNF002-00 / FTA), this protein is UPF0301 protein FTA_1286.